A 424-amino-acid chain; its full sequence is Histidine--tRNA ligase (424 aa).

The protein belongs to the class-II aminoacyl-tRNA synthetase family. As to quaternary structure, homodimer.

It is found in the cytoplasm. The catalysed reaction is tRNA(His) + L-histidine + ATP = L-histidyl-tRNA(His) + AMP + diphosphate + H(+). The sequence is that of Histidine--tRNA ligase from Thioalkalivibrio sulfidiphilus (strain HL-EbGR7).